A 72-amino-acid polypeptide reads, in one-letter code: UPF0154 protein EF_1734 (72 aa).

Residues 4–26 (GWVVLIAVIALLVGAAGGFFLAR) traverse the membrane as a helical segment.

The protein belongs to the UPF0154 family.

It is found in the membrane. In Enterococcus faecalis (strain ATCC 700802 / V583), this protein is UPF0154 protein EF_1734.